We begin with the raw amino-acid sequence, 161 residues long: Allophycocyanin beta chain (161 aa).

Asn-71 carries the post-translational modification N4-methylasparagine. Cys-81 provides a ligand contact to (2R,3E)-phycocyanobilin.

Belongs to the phycobiliprotein family. Heterodimer of an alpha and a beta chain. In terms of processing, contains one covalently linked phycocyanobilin chromophore.

Its subcellular location is the cellular thylakoid membrane. Functionally, light-harvesting photosynthetic bile pigment-protein from the phycobiliprotein complex. Allophycocyanin has a maximum absorption at approximately 650 nanometers. This chain is Allophycocyanin beta chain (apcB), found in Anabaena variabilis.